Reading from the N-terminus, the 408-residue chain is BRCA1-A complex subunit Abraxas 1 (408 aa).

The 149-residue stretch at 7–155 (TAVISGFVFG…KSTHRLEYAL (149 aa)) folds into the MPN domain. Residues 210–272 (ALAEVNRISD…MEEKGNKVSE (63 aa)) adopt a coiled-coil conformation. The disordered stretch occupies residues 335–408 (HRRQAGKRKA…EVSRSKSPTF (74 aa)). A compositionally biased stretch (basic residues) spans 337 to 358 (RQAGKRKAHSKQLGKTSTKKSR). The segment covering 394–408 (QSLNVEVSRSKSPTF) has biased composition (polar residues). Ser-405 is subject to Phosphoserine. Positions 405-408 (SPTF) match the pSXXF motif motif.

Belongs to the FAM175 family. Abraxas subfamily. In terms of assembly, component of the BRCA1-A complex. Component of the BRISC complex. Homodimer. Interacts directly (when phosphorylated at Ser-405) with brca1. The phosphorylated homodimer can interact directly with two brca1 chains, giving rise to a heterotetramer. In terms of processing, phosphorylation of Ser-405 of the pSXXF motif by ATM or ATR constitutes a specific recognition motif for the BRCT domain of BRCA1.

The protein localises to the nucleus. Its function is as follows. Involved in DNA damage response and double-strand break (DSB) repair. Component of the BRCA1-A complex, acting as a central scaffold protein that assembles the various components of the complex and mediates the recruitment of brca1. The BRCA1-A complex specifically recognizes 'Lys-63'-linked ubiquitinated histones H2A and H2AX at DNA lesion sites, leading to target the brca1-bard1 heterodimer to sites of DNA damage at DSBs. This complex also possesses deubiquitinase activity that specifically removes 'Lys-63'-linked ubiquitin on histones H2A and H2AX. This Xenopus laevis (African clawed frog) protein is BRCA1-A complex subunit Abraxas 1.